The chain runs to 104 residues: Large ribosomal subunit protein bL21 (104 aa).

Belongs to the bacterial ribosomal protein bL21 family. As to quaternary structure, part of the 50S ribosomal subunit. Contacts protein L20.

Its function is as follows. This protein binds to 23S rRNA in the presence of protein L20. This Helicobacter pylori (strain P12) protein is Large ribosomal subunit protein bL21.